The sequence spans 369 residues: Peptidyl-prolyl cis-trans isomerase D (369 aa).

The 169-residue stretch at 7–175 folds into the PPIase cyclophilin-type domain; it reads YFDISCNGKP…EDWKIADCGE (169 aa). TPR repeat units lie at residues 217-250, 268-301, and 306-339; these read VSKI…LNDY, LSCY…EQID, and TKAL…EPND.

Belongs to the cyclophilin-type PPIase family. PPIase D subfamily.

The protein localises to the cytoplasm. The enzyme catalyses [protein]-peptidylproline (omega=180) = [protein]-peptidylproline (omega=0). In terms of biological role, PPIases accelerate the folding of proteins. It catalyzes the cis-trans isomerization of proline imidic peptide bonds in oligopeptides. The sequence is that of Peptidyl-prolyl cis-trans isomerase D (CPR6) from Candida albicans (strain SC5314 / ATCC MYA-2876) (Yeast).